The following is a 288-amino-acid chain: Diaminopimelate epimerase (288 aa).

Asn-14 and Asn-67 together coordinate substrate. The active-site Proton donor is Cys-76. Substrate is bound by residues 77–78, Asn-166, Asn-199, and 217–218; these read GN and ER. Cys-226 serves as the catalytic Proton acceptor. 227 to 228 contacts substrate; it reads GT.

This sequence belongs to the diaminopimelate epimerase family. As to quaternary structure, homodimer.

It localises to the cytoplasm. It carries out the reaction (2S,6S)-2,6-diaminopimelate = meso-2,6-diaminopimelate. The protein operates within amino-acid biosynthesis; L-lysine biosynthesis via DAP pathway; DL-2,6-diaminopimelate from LL-2,6-diaminopimelate: step 1/1. Catalyzes the stereoinversion of LL-2,6-diaminopimelate (L,L-DAP) to meso-diaminopimelate (meso-DAP), a precursor of L-lysine and an essential component of the bacterial peptidoglycan. The protein is Diaminopimelate epimerase of Bacillus cereus (strain ATCC 14579 / DSM 31 / CCUG 7414 / JCM 2152 / NBRC 15305 / NCIMB 9373 / NCTC 2599 / NRRL B-3711).